The sequence spans 236 residues: Zinc finger AN1 domain-containing stress-associated protein 13 (236 aa).

2 disordered regions span residues 48–81 and 150–173; these read KEGRSGGGGGSEGQRTDSRLQLPTTSIVDSPGKR and TVPEGIPVDEGAMPPPPPPRAKTK. A compositionally biased stretch (polar residues) spans 66–75; it reads RLQLPTTSIV. The segment at 170–216 adopts an AN1-type; degenerate zinc-finger fold; sequence AKTKSRCAACGRRVGLMGFECRCGAVFCGAHPLLGQARLWLRLQGRA. The Zn(2+) site is built by Cys-176, Cys-179, Cys-197, and His-200.

In terms of biological role, may be involved in environmental stress response. The polypeptide is Zinc finger AN1 domain-containing stress-associated protein 13 (SAP13) (Oryza sativa subsp. japonica (Rice)).